Here is a 152-residue protein sequence, read N- to C-terminus: Ribosomal RNA large subunit methyltransferase H (152 aa).

Residues L70, G101, and 120–125 (LSDLTF) contribute to the S-adenosyl-L-methionine site.

Belongs to the RNA methyltransferase RlmH family. As to quaternary structure, homodimer.

Its subcellular location is the cytoplasm. It catalyses the reaction pseudouridine(1915) in 23S rRNA + S-adenosyl-L-methionine = N(3)-methylpseudouridine(1915) in 23S rRNA + S-adenosyl-L-homocysteine + H(+). Specifically methylates the pseudouridine at position 1915 (m3Psi1915) in 23S rRNA. In Pseudothermotoga lettingae (strain ATCC BAA-301 / DSM 14385 / NBRC 107922 / TMO) (Thermotoga lettingae), this protein is Ribosomal RNA large subunit methyltransferase H.